A 369-amino-acid chain; its full sequence is Probable N-acetyltransferase 16 (369 aa).

The interval 1–49 (MKLEASCGTATSEVPKPEKKTARDAEPSSETRPQEVEAEPRSGSGPEAE) is disordered. The segment covering 15–26 (PKPEKKTARDAE) has biased composition (basic and acidic residues). One can recognise an N-acetyltransferase domain in the interval 53–188 (LDFVVATERE…QGILLVRFNA (136 aa)).

In terms of biological role, probable N-acetyltransferase. Shows only trace activity toward L-His and no N-acetyltransferase activity toward other amino acids. The physiological substrate of this enzyme is unknown. The protein is Probable N-acetyltransferase 16 (NAT16) of Homo sapiens (Human).